A 298-amino-acid chain; its full sequence is UDP-3-O-acyl-N-acetylglucosamine deacetylase (298 aa).

Residues histidine 79, histidine 239, and aspartate 243 each coordinate Zn(2+). The active-site Proton donor is the histidine 266.

This sequence belongs to the LpxC family. Zn(2+) is required as a cofactor.

The catalysed reaction is a UDP-3-O-[(3R)-3-hydroxyacyl]-N-acetyl-alpha-D-glucosamine + H2O = a UDP-3-O-[(3R)-3-hydroxyacyl]-alpha-D-glucosamine + acetate. It functions in the pathway glycolipid biosynthesis; lipid IV(A) biosynthesis; lipid IV(A) from (3R)-3-hydroxytetradecanoyl-[acyl-carrier-protein] and UDP-N-acetyl-alpha-D-glucosamine: step 2/6. Its function is as follows. Catalyzes the hydrolysis of UDP-3-O-myristoyl-N-acetylglucosamine to form UDP-3-O-myristoylglucosamine and acetate, the committed step in lipid A biosynthesis. The sequence is that of UDP-3-O-acyl-N-acetylglucosamine deacetylase from Wigglesworthia glossinidia brevipalpis.